The primary structure comprises 610 residues: Glutamine--fructose-6-phosphate aminotransferase [isomerizing] (610 aa).

Cys2 (nucleophile; for GATase activity) is an active-site residue. Residues 2–221 (CGIVGAVAQR…DGDVVDLQLA (220 aa)) enclose the Glutamine amidotransferase type-2 domain. 2 SIS domains span residues 286–426 (AYKV…TRGR) and 459–600 (WADR…VDKP). Lys605 acts as the For Fru-6P isomerization activity in catalysis.

In terms of assembly, homodimer.

It is found in the cytoplasm. The catalysed reaction is D-fructose 6-phosphate + L-glutamine = D-glucosamine 6-phosphate + L-glutamate. Functionally, catalyzes the first step in hexosamine metabolism, converting fructose-6P into glucosamine-6P using glutamine as a nitrogen source. This is Glutamine--fructose-6-phosphate aminotransferase [isomerizing] from Bordetella pertussis (strain Tohama I / ATCC BAA-589 / NCTC 13251).